Reading from the N-terminus, the 127-residue chain is Turripeptide OL172 (127 aa).

Residues 1–20 (MFSTLIFLTAVTLLMMPSQT) form the signal peptide. Positions 42–43 (QR) are excised as a propeptide. Gln44 is modified (pyrrolidone carboxylic acid). Positions 73-75 (QRK) are excised as a propeptide. Pyrrolidone carboxylic acid is present on Gln76. The propeptide occupies 104 to 106 (QRK). Gln107 is subject to Pyrrolidone carboxylic acid.

In terms of processing, the turripeptide OL172 conotoxin-like contains 2 disulfide bonds. As to expression, expressed by the venom duct.

The protein resides in the secreted. Functionally, acts as a neurotoxin by inhibiting an ion channel. The polypeptide is Turripeptide OL172 (Iotyrris olangoensis (Sea snail)).